A 96-amino-acid chain; its full sequence is Large ribosomal subunit protein bL21 (96 aa).

It belongs to the bacterial ribosomal protein bL21 family. As to quaternary structure, part of the 50S ribosomal subunit. Contacts protein L20.

This protein binds to 23S rRNA in the presence of protein L20. The protein is Large ribosomal subunit protein bL21 of Prosthecochloris aestuarii (strain DSM 271 / SK 413).